The sequence spans 538 residues: NAD(P)H-quinone oxidoreductase chain 4 1 (538 aa).

A run of 13 helical transmembrane segments spans residues 7 to 27 (FPWLTAIIALPLVAALAIPII), 37 to 57 (WYGLGVAFADFALMIAAFWHY), 88 to 108 (LSMPLLLLTGLINTLAIFAAW), 116 to 136 (LFYGLMLVMYSAQLGVFVAQD), 137 to 157 (LLLFFLMWEIELVPVYLLISI), 170 to 190 (FILYTAAASIFILVAGFALAF), 210 to 230 (AIELLAYAGFLIAFGVKLPIF), 244 to 264 (SAPGSMILAGVLLKMGGYALI), 278 to 298 (FAPVLAILGVVNIVYGACCAF), 315 to 335 (MGFVLIGLASYTEIGVSGAVL), 336 to 356 (QMVSHGLVAASLFFLTGVTYE), 388 to 408 (LALPGMSGFVGELMVFIGIAT), and 418 to 438 (VVVVLLSAVGVILTPIYLLSM).

Belongs to the complex I subunit 4 family.

The protein resides in the cellular thylakoid membrane. The enzyme catalyses a plastoquinone + NADH + (n+1) H(+)(in) = a plastoquinol + NAD(+) + n H(+)(out). The catalysed reaction is a plastoquinone + NADPH + (n+1) H(+)(in) = a plastoquinol + NADP(+) + n H(+)(out). Functionally, NDH-1 shuttles electrons from NAD(P)H, via FMN and iron-sulfur (Fe-S) centers, to quinones in the respiratory chain. The immediate electron acceptor for the enzyme in this species is believed to be plastoquinone. Couples the redox reaction to proton translocation (for every two electrons transferred, four hydrogen ions are translocated across the cytoplasmic membrane), and thus conserves the redox energy in a proton gradient. The polypeptide is NAD(P)H-quinone oxidoreductase chain 4 1 (Nostoc sp. (strain PCC 7120 / SAG 25.82 / UTEX 2576)).